The chain runs to 344 residues: Meiotic recombination protein DMC1 homolog (344 aa).

The disordered stretch occupies residues 1 to 22 (MMASLKAEETSQMQLVEREEND). 133 to 140 (GEFRSGKT) provides a ligand contact to ATP. A dsDNA-binding site is contributed by Arg235. SsDNA is bound by residues Arg235, Phe238, Arg241, Arg247, and Arg315. DsDNA is bound by residues Arg241 and Arg247.

It belongs to the RecA family. DMC1 subfamily. In terms of assembly, double stacked ring-shaped homooctamer. Interacts with BRCA2A and BRCA2B. As to expression, expressed in mitotic and/or meiotic tissues. Expressed in roots, leaves and anthers and carpels of young fower buds.

It localises to the nucleus. May participate in meiotic recombination, specifically in homologous strand assimilation, which is required for the resolution of meiotic double-strand breaks. Mediates interhomolog recombination during meiosis. This is Meiotic recombination protein DMC1 homolog from Arabidopsis thaliana (Mouse-ear cress).